A 572-amino-acid polypeptide reads, in one-letter code: Putative inorganic phosphate transporter C8E4.01c (572 aa).

At 1–47 the chain is on the cytoplasmic side; sequence MAFGSKILNIGSKSDEYNDDAVPLDQVEEGAQERRYYLGLTKREFKL. Phosphoserine is present on residues Ser-12 and Ser-14. The chain crosses the membrane as a helical span at residues 48-68; that stretch reads MMLAGVGFFLDSYDLFIINLV. Topologically, residues 69–99 are extracellular; it reads TPIFEYLYWGGIEKGPTGKGHYPSGIRGLVN. Residues 100–120 form a helical membrane-spanning segment; the sequence is ASANIGNIFGQLLFGFMGDFF. Topologically, residues 121–123 are cytoplasmic; that stretch reads GRK. A helical transmembrane segment spans residues 124–144; the sequence is FVYGKEMVIVIIATVLVIAMP. The Extracellular portion of the chain corresponds to 145-153; that stretch reads KSIHSPLSK. The helical transmembrane segment at 154-174 threads the bilayer; the sequence is MMWVFCWRWLLGVGIGGDYPM. The Cytoplasmic segment spans residues 175 to 193; it reads SAAITSERSKIKRRGTLIS. The helical transmembrane segment at 194 to 214 threads the bilayer; the sequence is LIFAFQGFGTLAGAIVTIILL. Residues 215–229 lie on the Extracellular side of the membrane; sequence GCFEHPLNREGHYHK. A helical membrane pass occupies residues 230-250; sequence LEGVWRLQFGLALVPAIGVLI. Topologically, residues 251–346 are cytoplasmic; sequence PRLIMKESKS…TYFRQWRHFK (96 aa). The segment at 265–297 is disordered; that stretch reads KALNSAEGKDPKAFFNTDDEDNMKKSSSHGDSE. Over residues 286–296 the composition is skewed to basic and acidic residues; it reads NMKKSSSHGDS. Phosphoserine is present on residues Ser-292 and Ser-296. Residues 347–367 traverse the membrane as a helical segment; the sequence is HLLGTSVCWFLLDIAFYGVNL. The Extracellular segment spans residues 368 to 395; it reads NQSVILKNIGFSTGTNEYRTLMKNAIGN. A helical transmembrane segment spans residues 396–416; sequence LIIAVAGYVPGYWFNVFLVEI. Over 417 to 420 the chain is Cytoplasmic; the sequence is LGRK. The helical transmembrane segment at 421–441 threads the bilayer; sequence WIQLQGFVITGLMFAILAGRW. Over 442-449 the chain is Extracellular; that stretch reads NEISTGGR. The helical transmembrane segment at 450-470 threads the bilayer; it reads FACFVIAQLFSNFGPNSTTFI. At 471 to 485 the chain is on the cytoplasmic side; the sequence is YPAEVFPARVRGTAH. Residues 486–506 form a helical membrane-spanning segment; sequence GVSAALGKCGAILASLLFNFL. The Extracellular portion of the chain corresponds to 507–508; that stretch reads TG. A helical transmembrane segment spans residues 509–529; the sequence is VIGYGNVMWIFCGCMWGGILF. The Cytoplasmic segment spans residues 530–572; that stretch reads TLLLPETKGRDADEIDRLELFYGKDGKVQCDSKWKSWYFNGIF.

This sequence belongs to the major facilitator superfamily. Sugar transporter (TC 2.A.1.1) family.

It localises to the membrane. Functionally, high-affinity transporter for external inorganic phosphate. The protein is Putative inorganic phosphate transporter C8E4.01c of Schizosaccharomyces pombe (strain 972 / ATCC 24843) (Fission yeast).